The sequence spans 344 residues: Methylthioribose-1-phosphate isomerase (344 aa).

Substrate-binding positions include 55–57 (RGA), R98, and Q202. D243 acts as the Proton donor in catalysis. 253 to 254 (NK) contacts substrate.

The protein belongs to the eIF-2B alpha/beta/delta subunits family. MtnA subfamily.

The enzyme catalyses 5-(methylsulfanyl)-alpha-D-ribose 1-phosphate = 5-(methylsulfanyl)-D-ribulose 1-phosphate. Its pathway is amino-acid biosynthesis; L-methionine biosynthesis via salvage pathway; L-methionine from S-methyl-5-thio-alpha-D-ribose 1-phosphate: step 1/6. Its function is as follows. Catalyzes the interconversion of methylthioribose-1-phosphate (MTR-1-P) into methylthioribulose-1-phosphate (MTRu-1-P). This is Methylthioribose-1-phosphate isomerase from Gemmatimonas aurantiaca (strain DSM 14586 / JCM 11422 / NBRC 100505 / T-27).